We begin with the raw amino-acid sequence, 129 residues long: Lysozyme C-3 (129 aa).

The 129-residue stretch at 1-129 folds into the C-type lysozyme domain; that stretch reads KVYERCELAA…VSRWIRGCRL (129 aa). 4 disulfides stabilise this stretch: cysteine 6-cysteine 127, cysteine 30-cysteine 115, cysteine 64-cysteine 80, and cysteine 76-cysteine 94. Residues glutamate 35 and aspartate 52 contribute to the active site.

The protein belongs to the glycosyl hydrolase 22 family.

The protein localises to the secreted. It catalyses the reaction Hydrolysis of (1-&gt;4)-beta-linkages between N-acetylmuramic acid and N-acetyl-D-glucosamine residues in a peptidoglycan and between N-acetyl-D-glucosamine residues in chitodextrins.. In terms of biological role, lysozymes have primarily a bacteriolytic function; those in tissues and body fluids are associated with the monocyte-macrophage system and enhance the activity of immunoagents. This is Lysozyme C-3 from Anas platyrhynchos (Mallard).